We begin with the raw amino-acid sequence, 745 residues long: Kinesin-like protein KIN-14M (745 aa).

The interval 1–31 is disordered; sequence MVGEMTNNGRIRPSFPVKDLTSNEGSEYGGP. Residues 1–35 are globular; the sequence is MVGEMTNNGRIRPSFPVKDLTSNEGSEYGGPVEFT. Microtubule-binding stretches follow at residues 65–77 and 198–745; these read YVKR…RWFQ and SLQL…LSLG. 2 coiled-coil regions span residues 76–223 and 259–389; these read FQEL…GEKE and KDEL…GNIR. The 338-residue stretch at 387-724 folds into the Kinesin motor domain; that stretch reads NIRVFCRVRP…LRFAARVNAC (338 aa). 472 to 479 lines the ATP pocket; the sequence is GQTGSGKT.

It belongs to the TRAFAC class myosin-kinesin ATPase superfamily. Kinesin family. KIN-14 subfamily. Bind to microtubules in an ATP-insensitive manner (in vitro). Homodimer and heterodimer with KIN14N/KATC (in vitro).

It localises to the cytoplasm. The protein resides in the cytoskeleton. In Arabidopsis thaliana (Mouse-ear cress), this protein is Kinesin-like protein KIN-14M.